The chain runs to 469 residues: A-type ATP synthase subunit B 3 (469 aa).

It belongs to the ATPase alpha/beta chains family. Has multiple subunits with at least A(3), B(3), C, D, E, F, H, I and proteolipid K(x).

The protein resides in the cell membrane. Component of the A-type ATP synthase that produces ATP from ADP in the presence of a proton gradient across the membrane. The B chain is a regulatory subunit. This chain is A-type ATP synthase subunit B 3, found in Methanospirillum hungatei JF-1 (strain ATCC 27890 / DSM 864 / NBRC 100397 / JF-1).